We begin with the raw amino-acid sequence, 751 residues long: MIIRSSEPEVKIAVDRDPIKTSFEEWARPGHFSRTIAKGNPDTTTWIWNLHADAHDFDSHTGDLEEISRKVFSAHFGQLSIIFLWLSGMYFHGARFSNYEAWLSDPTHIGPSAQVVWPIVGQEILNGDVGGGFRGIQITSGFFQIWRASGITSELQLYCTAIGALIFASLMLFAGWFHYHKAAPKLAWFQDVESMLNHHLAGLLGLGSLSWAGHQIHVSLPINQFLDAGVDPKEIPLPHEFILNRDLLAQLYPSFAEGATPFFTLNWSKYAEFLSFRGGLDPITGGLWLSDIAHHHLAIAILFLIAGHMYRTNWGIGHGLKDILEAHKGPFTGQGHKGLYEILTTSWHAQLSLNLAMLGSTTIVVAHHMYSMPPYPYLATDYGTQLSLFTHHMWIGGFLIVGAAAHAAIFMVRDYDPTTRYNDLLDRVLRHRDAIISHLNWVCIFLGFHSFGLYIHNDTMSALGRPQDMFSDAAIQLQPIFAQWIQNIHAGAPGVTAPGATTSTSLTWGGGELVAIGGKVALLPIPLGTADFLVHHIHAFTIHVTVLILLKGVLFARSSRLIPDKANLGFRFPCDGPGRGGTCQVSAWDHVFLGLFWMYNSISVVIFHFSWKMQSDVWGTISDQGIVTHITGGNFAQSSITINGWLRDFLWAQASQVIQSYGSSLSAYGLFFLGAHFVWAFSLMFLFSGRGYWQELIESIVWAHNKLKVAPATQPRALSIIQGRAVGVTHYLLGGIATTWAFFLARIIAVG.

Helical transmembrane passes span 71 to 94 (VFSA…FHGA), 157 to 180 (LYCT…FHYH), 196 to 220 (LNHH…HVSL), 292 to 310 (IAHH…GHMY), 347 to 370 (WHAQ…HHMY), 386 to 412 (LSLF…IFMV), 434 to 456 (AIIS…LYIH), and 532 to 550 (FLVH…LILL). Positions 574 and 583 each coordinate [4Fe-4S] cluster. The next 2 membrane-spanning stretches (helical) occupy residues 590–611 (HVFL…HFSW) and 665–687 (LSAY…MFLF). Position 676 (His-676) interacts with chlorophyll a'. The chlorophyll a site is built by Met-684 and Tyr-692. Trp-693 lines the phylloquinone pocket. A helical membrane pass occupies residues 725–745 (AVGVTHYLLGGIATTWAFFLA).

Belongs to the PsaA/PsaB family. The PsaA/B heterodimer binds the P700 chlorophyll special pair and subsequent electron acceptors. PSI consists of a core antenna complex that captures photons, and an electron transfer chain that converts photonic excitation into a charge separation. The eukaryotic PSI reaction center is composed of at least 11 subunits. P700 is a chlorophyll a/chlorophyll a' dimer, A0 is one or more chlorophyll a, A1 is one or both phylloquinones and FX is a shared 4Fe-4S iron-sulfur center. is required as a cofactor.

It localises to the plastid. The protein resides in the chloroplast thylakoid membrane. It catalyses the reaction reduced [plastocyanin] + hnu + oxidized [2Fe-2S]-[ferredoxin] = oxidized [plastocyanin] + reduced [2Fe-2S]-[ferredoxin]. PsaA and PsaB bind P700, the primary electron donor of photosystem I (PSI), as well as the electron acceptors A0, A1 and FX. PSI is a plastocyanin-ferredoxin oxidoreductase, converting photonic excitation into a charge separation, which transfers an electron from the donor P700 chlorophyll pair to the spectroscopically characterized acceptors A0, A1, FX, FA and FB in turn. Oxidized P700 is reduced on the lumenal side of the thylakoid membrane by plastocyanin. In Zea mays (Maize), this protein is Photosystem I P700 chlorophyll a apoprotein A1.